The chain runs to 240 residues: Ubiquitin domain-containing protein 1 (240 aa).

The interval 1–48 (MGGCVGRPQGESQRSQSRASGQQRKRAGRNEPLKKERPRWKSDYPMTD) is disordered. Residues 12–22 (SQRSQSRASGQ) show a composition bias toward low complexity. The span at 28–42 (GRNEPLKKERPRWKS) shows a compositional bias: basic and acidic residues. A Ubiquitin-like domain is found at 153–228 (FQLKVRLSTG…DTSYCKPATR (76 aa)).

Its function is as follows. May be involved in the regulation of cellular senescence through a positive feedback loop with TP53. This is Ubiquitin domain-containing protein 1 (ubtd1) from Xenopus tropicalis (Western clawed frog).